The following is a 384-amino-acid chain: Aryl-alcohol dehydrogenase GME11368 (384 aa).

Aspartate 69 serves as a coordination point for NADP(+). Catalysis depends on tyrosine 74, which acts as the Proton donor. Residues 177–178 (SD), glutamine 203, and 301–309 (RKPEHLKAN) contribute to the NADP(+) site.

Belongs to the aldo/keto reductase family. Aldo/keto reductase 2 subfamily.

The protein operates within secondary metabolite biosynthesis. Functionally, aryl-alcohol dehydrogenase; part of the gene cluster that mediates the biosynthesis of dibenzodioxocinones such as pestalotiollide B, a novel class of inhibitors against cholesterol ester transfer protein (CEPT). The biosynthesis initiates from condensation of acetate and malonate units catalyzed by the non-reducing PKS pks8/GME11356. Pks8/GME11356 lacks a thioesterase (TE) domain, which is important to the cyclizing of the third ring of atrochrysone carboxylic acid, and the esterase GME11355 might play the role of TE and catalyzes the cyclization reaction of the C ring. The lactamase-like protein GME11357 (or other beta-lactamases in Pestalotiopsis microspora) probably hydrolyzes the thioester bond between the ACP of pks8/GME11356 and the intermediate to release atrochrysone carboxylic acid, which is spontaneously dehydrates to form endocrocin anthrone. Endocrocin anthrone is further converted to emodin via the endocrocin intermediate. Emodin is then oxidized by several enzymes such as the Baeyer-Villiger oxidase GME11358, the oxidoreductase GME11367, the short chain dehydrogenase/reductase GME11373, as well as by other oxidoreductases from the cluster, to modify the A and C rings and open the B ring, and finally yield monodictyphenone. The prenyltransferase GME11375 may catalyze the addition reaction between the C5 side chains and the carbon bone of dibenzodioxocinones. The remaining biochemical reactions to the final product dibenzodioxocinones should be methylation catalyzed by methyltransferase GME11366 and reduction and lactonization reaction catalyzed by a series of oxidordeuctases. The polypeptide is Aryl-alcohol dehydrogenase GME11368 (Pestalotiopsis microspora).